A 308-amino-acid polypeptide reads, in one-letter code: Staphylococcal superantigen-like 4 (308 aa).

A signal peptide spans 1 to 30 (MKITTIAKTSLALGLLTTGVITTTTQAANA). Residues 32–117 (TLSSTKVEAP…TTKQVPTEIN (86 aa)) are disordered. Composition is skewed to polar residues over residues 33 to 47 (LSST…TPPS) and 55 to 76 (SKPN…TANA). A compositionally biased stretch (low complexity) spans 77 to 93 (TTPPSTKVTTPPSTNTP). Polar residues predominate over residues 94 to 114 (QPMQSTKSDTPQSPTTKQVPT). The interval 180 to 278 (VDVFVVLEEN…VIKMKNGGKY (99 aa)) is sialyl Lewis X-binding.

It belongs to the staphylococcal/streptococcal toxin family.

The protein localises to the secreted. In terms of biological role, secreted protein that plays a role in immune innate response inhibition by interfering with host TLR2-mediated pathway. The protein is Staphylococcal superantigen-like 4 of Staphylococcus aureus (strain NCTC 8325 / PS 47).